A 257-amino-acid polypeptide reads, in one-letter code: Large ribosomal subunit protein uL3 (257 aa).

N5-methylglutamine is present on Gln151. A disordered region spans residues 218-257; the sequence is YPASIKSAANTNTAPADAPVETPAEEAVVDTAATDGAQES. Residues 225 to 236 are compositionally biased toward low complexity; the sequence is AANTNTAPADAP.

It belongs to the universal ribosomal protein uL3 family. As to quaternary structure, part of the 50S ribosomal subunit. Forms a cluster with proteins L14 and L19. In terms of processing, methylated by PrmB.

Its function is as follows. One of the primary rRNA binding proteins, it binds directly near the 3'-end of the 23S rRNA, where it nucleates assembly of the 50S subunit. The polypeptide is Large ribosomal subunit protein uL3 (Sphingopyxis alaskensis (strain DSM 13593 / LMG 18877 / RB2256) (Sphingomonas alaskensis)).